Reading from the N-terminus, the 397-residue chain is T-box transcription factor TBX19 (397 aa).

Residues 48–216 (LWQRFREVTN…YNPFAKAFLD (169 aa)) constitute a DNA-binding region (T-box). The tract at residues 220–248 (RNHPKDAPEAASEGQHMTYSHSPQAPHGC) is disordered.

The protein resides in the nucleus. In terms of biological role, may be involved in the initial formation of the chordamesoderm. This Gallus gallus (Chicken) protein is T-box transcription factor TBX19.